Consider the following 247-residue polypeptide: Probable phosphatase swp_1620 (247 aa).

Zn(2+)-binding residues include His8, His10, His16, His41, Glu74, His102, His132, Asp193, and His195.

Belongs to the PHP family. It depends on Zn(2+) as a cofactor.

This Shewanella piezotolerans (strain WP3 / JCM 13877) protein is Probable phosphatase swp_1620.